The primary structure comprises 558 residues: UvrABC system protein C (558 aa).

The region spanning Leu12 to Val92 is the GIY-YIG domain. In terms of domain architecture, UVR spans Ser200–Val235.

This sequence belongs to the UvrC family. As to quaternary structure, interacts with UvrB in an incision complex.

The protein localises to the cytoplasm. Functionally, the UvrABC repair system catalyzes the recognition and processing of DNA lesions. UvrC both incises the 5' and 3' sides of the lesion. The N-terminal half is responsible for the 3' incision and the C-terminal half is responsible for the 5' incision. This is UvrABC system protein C from Pseudothermotoga lettingae (strain ATCC BAA-301 / DSM 14385 / NBRC 107922 / TMO) (Thermotoga lettingae).